A 104-amino-acid chain; its full sequence is Protamine-2 (104 aa).

Ser-8 and Ser-10 each carry phosphoserine. The tract at residues 23–104 (WQEQGRNGQE…SRRRRRCRRY (82 aa)) is disordered. The span at 24–35 (QEQGRNGQEEQG) shows a compositional bias: low complexity. Ser-37 is modified (phosphoserine). Positions 54–104 (YRRRRCSRRRRYRIHRRRSRSCRRRRRRSCRYRRRPRRGCRSRRRRRCRRY) are enriched in basic residues.

This sequence belongs to the protamine P2 family. In terms of assembly, interacts with TDRP. In terms of processing, proteolytic processing into mature chains is required for histone eviction during spermatogenesis. Transition proteins (TNP1 and TNP2) are required for processing. As to expression, testis.

It is found in the nucleus. The protein resides in the chromosome. Its function is as follows. Protamines substitute for histones in the chromatin of sperm during the haploid phase of spermatogenesis. They compact sperm DNA into a highly condensed, stable and inactive complex. This is Protamine-2 (PRM2) from Callithrix jacchus (White-tufted-ear marmoset).